The chain runs to 75 residues: Phytosulfokines 3 (75 aa).

Positions 1-22 (MSPKVIAICLVALLLPISISHG) are cleaved as a signal peptide. Residues 23–66 (GRIGPIEPSKASSKVVERGNYDGRVEGCEEDDCLVERLLVAHLD) constitute a propeptide that is removed on maturation. 2 positions are modified to sulfotyrosine: Y67 and Y69. The propeptide occupies 72–75 (GKHN).

The protein belongs to the phytosulfokine family. Sulfation is important for activity and for the binding to a putative membrane receptor. Post-translationally, PSK-alpha is produced by endopeptidase digestion. PSK-beta is produced from PSK-alpha by exopeptidase digestion.

The protein localises to the secreted. In terms of biological role, promotes plant cell differentiation, organogenesis and somatic embryogenesis as well as cell proliferation. The polypeptide is Phytosulfokines 3 (PSK3) (Oryza sativa subsp. japonica (Rice)).